The following is a 424-amino-acid chain: Histidine--tRNA ligase (424 aa).

Belongs to the class-II aminoacyl-tRNA synthetase family. Homodimer.

It localises to the cytoplasm. The enzyme catalyses tRNA(His) + L-histidine + ATP = L-histidyl-tRNA(His) + AMP + diphosphate + H(+). The protein is Histidine--tRNA ligase of Escherichia coli (strain 55989 / EAEC).